Here is a 127-residue protein sequence, read N- to C-terminus: MGLPKLNRLKSPREFQAVYQRGQRYQSDRLVLRVLWITDKTSNPAPTQFGIAISQKVSKKAVVRNRLKRQIKGAIRVLLPFIAPGAKIVISVRGNVSECQYEHFLRELKKLLIKAKIIYGHTREYFL.

This sequence belongs to the RnpA family. In terms of assembly, consists of a catalytic RNA component (M1 or rnpB) and a protein subunit.

It catalyses the reaction Endonucleolytic cleavage of RNA, removing 5'-extranucleotides from tRNA precursor.. Functionally, RNaseP catalyzes the removal of the 5'-leader sequence from pre-tRNA to produce the mature 5'-terminus. It can also cleave other RNA substrates such as 4.5S RNA. The protein component plays an auxiliary but essential role in vivo by binding to the 5'-leader sequence and broadening the substrate specificity of the ribozyme. The chain is Ribonuclease P protein component from Rippkaea orientalis (strain PCC 8801 / RF-1) (Cyanothece sp. (strain PCC 8801)).